A 90-amino-acid chain; its full sequence is UPF0237 protein NMB1653 (90 aa).

The ACT domain occupies 5–83; the sequence is VITVIGKDRV…LDIRMQNEEI (79 aa).

The protein belongs to the UPF0237 family.

This Neisseria meningitidis serogroup B (strain ATCC BAA-335 / MC58) protein is UPF0237 protein NMB1653.